The sequence spans 353 residues: Probable D-xylulose reductase A (353 aa).

The Zn(2+) site is built by cysteine 42, histidine 67, and glutamate 68. 177–182 lines the NAD(+) pocket; that stretch reads GAGPVG.

Belongs to the zinc-containing alcohol dehydrogenase family. It depends on Zn(2+) as a cofactor.

It carries out the reaction xylitol + NAD(+) = D-xylulose + NADH + H(+). Its pathway is carbohydrate degradation; L-arabinose degradation via L-arabinitol; D-xylulose 5-phosphate from L-arabinose (fungal route): step 4/5. Functionally, xylitol dehydrogenase which catalyzes the conversion of xylitol to D-xylulose. Xylose is a major component of hemicelluloses such as xylan. Most fungi utilize D-xylose via three enzymatic reactions, xylose reductase (XR), xylitol dehydrogenase (XDH), and xylulokinase, to form xylulose 5-phosphate, which enters pentose phosphate pathway. The protein is Probable D-xylulose reductase A (xdhA) of Aspergillus terreus (strain NIH 2624 / FGSC A1156).